The following is a 102-amino-acid chain: MESVRSLVEDKPVVIFSKSSCCMSHSIQTLISGFGAKMTVYELDQFSNGQEIEKALVQMGCKPSVPAVFIGQQFIGGANQVMTLQVKNQLAAMLRRAGAIWV.

Residues 1–101 (MESVRSLVED…AMLRRAGAIW (101 aa)) form the Glutaredoxin domain. Cys21 provides a ligand contact to [2Fe-2S] cluster.

This sequence belongs to the glutaredoxin family. CC-type subfamily.

It is found in the cytoplasm. Functionally, may only reduce GSH-thiol disulfides, but not protein disulfides. This is Monothiol glutaredoxin-S6 (GRXS6) from Arabidopsis thaliana (Mouse-ear cress).